We begin with the raw amino-acid sequence, 263 residues long: Aquaglyceroporin (263 aa).

The interval 1–22 (MDQFVFSGGSEGGGELGGDRER) is disordered. 6 consecutive transmembrane segments (helical) span residues 41–61 (KYFC…FGLA), 64–84 (GGAQ…ITLF), 113–133 (LCYV…GYGI), 157–177 (VIPT…YGVM), 180–200 (LTVP…GATM), and 222–242 (VAAL…AFLG).

The protein belongs to the MIP/aquaporin (TC 1.A.8) family. In terms of assembly, multimer.

The protein localises to the vacuole membrane. It carries out the reaction H2O(in) = H2O(out). It catalyses the reaction glycerol(in) = glycerol(out). The catalysed reaction is urea(in) = urea(out). Mediates water and glycerol transport across cell membranes. Permeable to selected sugar alcohols of up to five carbons and urea. Permeable to methylamine/methylammonium. The sequence is that of Aquaglyceroporin from Toxoplasma gondii (strain ATCC 50611 / Me49).